Reading from the N-terminus, the 376-residue chain is Alpha-2,8-sialyltransferase 8E (376 aa).

The chain crosses the membrane as a helical span at residues 17 to 37 (TLLFIFICAFALVTLLQQILY). N56 is a glycosylation site (N-linked (GlcNAc...) asparagine). Disulfide bonds link C164–C313 and C178–C373. Residues N192 and 214–216 (NPS) each bind substrate. N-linked (GlcNAc...) asparagine glycosylation occurs at N241. 300–302 (STG) serves as a coordination point for substrate. H348 (proton donor/acceptor) is an active-site residue.

Belongs to the glycosyltransferase 29 family. In terms of tissue distribution, expressed in liver.

It is found in the golgi apparatus membrane. The catalysed reaction is a ganglioside GT1b (d18:1(4E)) + CMP-N-acetyl-beta-neuraminate = a ganglioside GQ1b (d18:1(4E)) + CMP + H(+). The enzyme catalyses a ganglioside GQ1c (d18:1(4E)) + CMP-N-acetyl-beta-neuraminate = a ganglioside GP1c (d18:1(4E)) + CMP + H(+). It catalyses the reaction a ganglioside GD3 (d18:1(4E)) + CMP-N-acetyl-beta-neuraminate = a ganglioside GT3 (d18:1(4E)) + CMP + H(+). It carries out the reaction a ganglioside GD1a (d18:1(4E)) + CMP-N-acetyl-beta-neuraminate = a ganglioside GT1a (d18:1(4E)) + CMP + H(+). The catalysed reaction is a ganglioside GM1b (d18:1(4E)) + CMP-N-acetyl-beta-neuraminate = a ganglioside GD1c (d18:1(4E)) + CMP + H(+). It functions in the pathway protein modification; protein glycosylation. Its function is as follows. Involved in the synthesis of gangliosides GD1c, GT1a, GQ1b, GP1c and GT3 from GD1a, GT1b, GM1b and GD3 respectively. The chain is Alpha-2,8-sialyltransferase 8E from Rattus norvegicus (Rat).